Consider the following 36-residue polypeptide: Conotoxin Bt11.4 (36 aa).

4 cysteine pairs are disulfide-bonded: Cys-2/Cys-16, Cys-9/Cys-21, Cys-15/Cys-26, and Cys-20/Cys-33.

It belongs to the conotoxin I1 superfamily. Expressed by the venom duct.

Its subcellular location is the secreted. This is Conotoxin Bt11.4 from Conus betulinus (Beech cone).